The chain runs to 104 residues: Integration host factor subunit beta (104 aa).

This sequence belongs to the bacterial histone-like protein family. Heterodimer of an alpha and a beta chain.

Functionally, this protein is one of the two subunits of integration host factor, a specific DNA-binding protein that functions in genetic recombination as well as in transcriptional and translational control. The sequence is that of Integration host factor subunit beta (ihfB) from Xylella fastidiosa (strain 9a5c).